We begin with the raw amino-acid sequence, 805 residues long: Leucine--tRNA ligase (805 aa).

Residues 40 to 51 (PYPSGSGLHVGH) carry the 'HIGH' region motif. A 'KMSKS' region motif is present at residues 576 to 580 (KMSKS). Lysine 579 lines the ATP pocket.

This sequence belongs to the class-I aminoacyl-tRNA synthetase family.

It localises to the cytoplasm. It catalyses the reaction tRNA(Leu) + L-leucine + ATP = L-leucyl-tRNA(Leu) + AMP + diphosphate. In Chlorobium limicola (strain DSM 245 / NBRC 103803 / 6330), this protein is Leucine--tRNA ligase.